Consider the following 281-residue polypeptide: Tryptophan 2,3-dioxygenase (281 aa).

Residues 50 to 54, Y112, and R116 contribute to the substrate site; that span reads FIIQH. H239 contributes to the heme binding site. T253 is a substrate binding site.

The protein belongs to the tryptophan 2,3-dioxygenase family. Homotetramer. Requires heme as cofactor.

The catalysed reaction is L-tryptophan + O2 = N-formyl-L-kynurenine. It participates in amino-acid degradation; L-tryptophan degradation via kynurenine pathway; L-kynurenine from L-tryptophan: step 1/2. Functionally, heme-dependent dioxygenase that catalyzes the oxidative cleavage of the L-tryptophan (L-Trp) pyrrole ring and converts L-tryptophan to N-formyl-L-kynurenine. Catalyzes the oxidative cleavage of the indole moiety. This Saccharopolyspora erythraea (strain ATCC 11635 / DSM 40517 / JCM 4748 / NBRC 13426 / NCIMB 8594 / NRRL 2338) protein is Tryptophan 2,3-dioxygenase.